Consider the following 508-residue polypeptide: Cell death protein 3 (508 aa).

Positions 1-223 are excised as a propeptide; the sequence is MMRQDRRNLL…FHEEDMNYVD (223 aa). Residues 2–91 enclose the CARD domain; sequence MRQDRRNLLE…HELAAVLEPL (90 aa). Disordered stretches follow at residues 106–130 and 148–184; these read PMSP…TRVH and YTRA…SSAN. Polar residues predominate over residues 118–127; sequence LSPSTFSSPT. Residues 171–184 show a composition bias toward low complexity; sequence SPSNSFQSQPSSAN. Active-site residues include H317 and C360. Positions 392 to 407 are required for interaction with ced-4; sequence GPLFNFLGCVRPQAQQ.

Belongs to the peptidase C14A family. In terms of assembly, the active form is probably a heterodimer of the p17 subunit with either the p15 or p13 subunit which are all derived from the precursor by autocatalysis. Interacts with octameric ced-4 (two ced-3 zymogens per one ced-4 octamer); the interaction causes the autoproteolytic cleavage and activation of ced-3. Processed ced-3 also interacts with ced-4 octamer to form a stable holoenzyme. Interacts (via large subunit p17) with csp-3; the interaction prevents ced-3 autoactivation and delays ced-4-induced ced-3 processing. Interacts (via large subunit p17 or small subunit p13 or p15) with csp-2; the interaction inhibits ced-3 autoactivation. Interacts (via propeptide) with nucleoporin npp-14; the interaction tethers ced-3 to the nuclear membrane and prevents its autoprocessing in absence of ced-4. Interacts with dct-1. May form a complex composed of ced-3, ced-4 and mac-1. Post-translationally, autocatalytic cleavage removes the propeptide and generates the catalytic subunit p17 and two non-catalytic subunits p15 and p13; autoproteolysis is induced by ced-4 oligomer. Cleaved by caspase csp-1 probably at Asp-146 and Asp-376.

The protein resides in the nucleus membrane. Its subcellular location is the perikaryon. It localises to the synapse. The protein localises to the mitochondrion. It is found in the cytoplasm. The protein resides in the perinuclear region. The enzyme catalyses Strict requirement for an Asp residue at position P1 and has a preferred cleavage sequence of Asp-Glu-Val-Asp-|-.. Its activity is regulated as follows. Octameric ced-4 activates zymogen autoprocessing and enhances activity of processed ced-3. Zymogen autoactivation is inhibited by csp-3. csp-3 has no effect on active ced-3. Zymogen autoactivation is inhibited by csp-2. Inhibited by cysteine protease inhibitor iodoacetic acid (CH3COOI). Inhibited by benzyloxycarbonyl-DEVD-fluoro-methyl ketone (zDEVD-fmk). Inhibited by benzyloxycarbonyl-VAD-fluoro-methyl ketone (zVAD-fmk). Not inhibited by N-[N-(L-3-transcarboxirane-2-carbonyl)-leucyl]-agmatine (E-64) or by the serine and cysteine protease inhibitor L-1-chloro-3-[4-to-osylamido]-7-amino-2-heptanone (TLCK). Its function is as follows. Acts as a cysteine protease in controlling programmed cell death (apoptosis) by proteolytically activating or inactivating a wide range of substrates. Component of the egl-1, ced-9, ced-4 and ced-3 apoptotic signaling cascade required for the initiation of programmed cell death in cells fated to die during embryonic and postembryonic development. During oogenesis, required for germline apoptosis downstream of ced-9 and ced-4 but independently of egl-1. By cleaving and activating ced-8, promotes phosphatidylserine exposure on the surface of apoptotic cells; phosphatidylserine is a specific marker only present at the surface of apoptotic cells and acts as a specific signal for engulfment. By cleaving and converting dcr-1 into a deoxyribonuclease (DNase), promotes apoptotic chromosomal DNA fragmentation. By cleaving mitochondrial fission protein drp-1, may regulate the removal of mitochondria during apoptosis. During germline apoptosis, cleaves translation initiation factor ifg-1 (isoform p170) promoting cap-independent translation. During male tail morphogenesis, promotes apoptosis of the tail-spike cell downstream of ced-4 but independently of egl-1 and ced-9. By cleaving cnt-1, prevents the activation of the prosurvival akt-1/2 signaling pathway and thus promotes apoptosis. Downstream of ced-4, may play a role in sex-specific cell apoptosis by cleaving sex-determining protein fem-1. May regulate germline apoptosis in response to DNA damage, probably downstream of let-60/ras and mpk-1 pathway. Cleaves ced-9 in vitro. Cleaves csp-2 isoform b resulting in the removal of the propeptide and the generation of csp-2 subunit p31 in vitro. Independently of its apoptotic role has additional functions. Probably by cleaving and thereby activating actin-severing protein gsnl-1, required for the elimination of transient presynaptic components during larval development downstream of egl-1, ced-9 and ced-4 pathway. Together with ain-1, a component of the miRNA-induced-silencing complex (miRISC), regulates temporal cell fate patterning during larval development. Acts in cell fate patterning by cleaving heterochronic protein lin-28, likely promoting its degradation. Also cleaves heterochronic protein lin-14 and exonuclease disl-2 in vitro. Downstream of calreticulin crt-1 and ced-4 and independently of egl-1 and ced-9, plays a role in the initial steps of axonal regrowth following axotomy. Cleaves 14-3-3-like protein ftt-2, tubulin tbb-2 and calreticulin crt-1 in vitro. Plays also a role in resistance to S.typhimurium-mediated infection. The sequence is that of Cell death protein 3 from Caenorhabditis remanei (Caenorhabditis vulgaris).